We begin with the raw amino-acid sequence, 125 residues long: MKRLLSWLTGLVVIAGLLIGLLVPPSVSAAEIRNVADDKLAERGDKVDLNNSSVRRFQQFPGMYPTFAGKIVLGGPYENVDDVLKLDLSERQKELFEKYRDNFVVTAPSIALNEGFDRINDGQFR.

The signal sequence occupies residues 1 to 29; sequence MKRLLSWLTGLVVIAGLLIGLLVPPSVSA.

Belongs to the PsbU family. As to quaternary structure, PSII is composed of 1 copy each of membrane proteins PsbA, PsbB, PsbC, PsbD, PsbE, PsbF, PsbH, PsbI, PsbJ, PsbK, PsbL, PsbM, PsbT, PsbX, PsbY, PsbZ, Psb30/Ycf12, peripheral proteins PsbO, CyanoQ (PsbQ), PsbU, PsbV and a large number of cofactors. It forms dimeric complexes.

Its subcellular location is the cellular thylakoid membrane. In terms of biological role, one of the extrinsic, lumenal subunits of photosystem II (PSII). PSII is a light-driven water plastoquinone oxidoreductase, using light energy to abstract electrons from H(2)O, generating a proton gradient subsequently used for ATP formation. The extrinsic proteins stabilize the structure of photosystem II oxygen-evolving complex (OEC), the ion environment of oxygen evolution and protect the OEC against heat-induced inactivation. The protein is Photosystem II extrinsic protein U of Synechococcus sp. (strain CC9311).